A 356-amino-acid chain; its full sequence is 3-isopropylmalate dehydrogenase (356 aa).

Residues Arg-95, Arg-105, Arg-133, and Asp-223 each contribute to the substrate site. Mg(2+)-binding residues include Asp-223, Asp-247, and Asp-251. 281-293 contacts NAD(+); it reads GSAPDIAGQNKAN.

It belongs to the isocitrate and isopropylmalate dehydrogenases family. LeuB type 1 subfamily. Homodimer. Requires Mg(2+) as cofactor. Mn(2+) serves as cofactor.

Its subcellular location is the cytoplasm. It catalyses the reaction (2R,3S)-3-isopropylmalate + NAD(+) = 4-methyl-2-oxopentanoate + CO2 + NADH. The protein operates within amino-acid biosynthesis; L-leucine biosynthesis; L-leucine from 3-methyl-2-oxobutanoate: step 3/4. Functionally, catalyzes the oxidation of 3-carboxy-2-hydroxy-4-methylpentanoate (3-isopropylmalate) to 3-carboxy-4-methyl-2-oxopentanoate. The product decarboxylates to 4-methyl-2 oxopentanoate. In Neisseria gonorrhoeae (strain ATCC 700825 / FA 1090), this protein is 3-isopropylmalate dehydrogenase.